The following is a 168-amino-acid chain: Photosystem I assembly protein Ycf3 (168 aa).

3 TPR repeats span residues 35–68 (AFTY…EIDP), 72–105 (SYIL…NPFL), and 120–153 (GEQA…TPGN).

This sequence belongs to the Ycf3 family. Interacts with Y3IP1.

The protein localises to the plastid. The protein resides in the chloroplast thylakoid membrane. Functionally, essential for the assembly of the photosystem I (PSI) complex. May act as a chaperone-like factor to guide the assembly of the PSI subunits. The protein is Photosystem I assembly protein Ycf3 of Arabidopsis thaliana (Mouse-ear cress).